A 20-amino-acid chain; its full sequence is Hemocyanin subunit II (20 aa).

Residues 1–20 (DVVASSTAHKQQDINHLLDK) form a disordered region. A compositionally biased stretch (basic and acidic residues) spans 10–20 (KQQDINHLLDK).

It belongs to the tyrosinase family. Hemocyanin subfamily. In terms of assembly, composed of 3 major subunits (IB, II and III) and 1 minor subunit (IA) which form homohexamers and heterohexamers. May also form larger structures. In terms of tissue distribution, hemolymph.

It is found in the secreted. Its subcellular location is the extracellular space. Hemocyanins are copper-containing oxygen carriers occurring freely dissolved in the hemolymph of many mollusks and arthropods. The sequence is that of Hemocyanin subunit II from Panulirus japonicus (Japanese spiny lobster).